Consider the following 485-residue polypeptide: Glutamate mutase epsilon subunit (485 aa).

L-glutamate is bound at residue arginine 100. An adenosylcob(III)alamin-binding site is contributed by asparagine 123. Residues 149–150 (KH) and aspartate 171 each bind L-glutamate. Residues proline 180, phenylalanine 297, lysine 326, and glutamate 330 each coordinate adenosylcob(III)alamin.

It belongs to the methylaspartate mutase GlmE subunit family. In terms of assembly, heterotetramer composed of 2 epsilon subunits (GlmE) and 2 sigma subunits (GlmS). GlmE exists as a homodimer and GlmS as a monomer. Requires adenosylcob(III)alamin as cofactor.

It carries out the reaction (2S,3S)-3-methyl-L-aspartate = L-glutamate. The protein operates within amino-acid degradation; L-glutamate degradation via mesaconate pathway; acetate and pyruvate from L-glutamate: step 1/4. Catalyzes the carbon skeleton rearrangement of L-glutamate to L-threo-3-methylaspartate ((2S,3S)-3-methylaspartate). The protein is Glutamate mutase epsilon subunit of Fusobacterium nucleatum subsp. nucleatum (strain ATCC 25586 / DSM 15643 / BCRC 10681 / CIP 101130 / JCM 8532 / KCTC 2640 / LMG 13131 / VPI 4355).